We begin with the raw amino-acid sequence, 358 residues long: 3'(2'),5'-bisphosphate nucleotidase 2 (358 aa).

Asp54 (proton acceptor) is an active-site residue. Mg(2+) is bound by residues Glu77, Asp141, Ile143, and Asp144. The Proton acceptor role is filled by Thr146. Adenosine 3',5'-bisphosphate is bound by residues Thr146, His243, Ser272, Lys275, Arg289, and Asp302. Positions 243, 272, 275, 289, and 302 each coordinate AMP. Asp302 contacts Mg(2+).

It belongs to the inositol monophosphatase superfamily. Mg(2+) is required as a cofactor.

The enzyme catalyses 3'-phosphoadenylyl sulfate + H2O = adenosine 5'-phosphosulfate + phosphate. It carries out the reaction adenosine 3',5'-bisphosphate + H2O = AMP + phosphate. It catalyses the reaction adenosine 2',5'-bisphosphate + H2O = AMP + phosphate. Phosphatase that converts adenosine 3'-phosphate 5'-phosphosulfate (PAPS) to adenosine 5'-phosphosulfate (APS) and 3'(2')-phosphoadenosine 5'-phosphate (PAP) to AMP. Regulates the flux of sulfur in the sulfur-activation pathway by converting PAPS to APS. Involved in salt tolerance. This Candida albicans (strain SC5314 / ATCC MYA-2876) (Yeast) protein is 3'(2'),5'-bisphosphate nucleotidase 2 (HAL22).